The sequence spans 328 residues: Probable transcription factor At4g00610 (328 aa).

Residues 31 to 143 (AKNKTLVTPS…ERAKTETETG (113 aa)) form a disordered region. Over residues 35–54 (TLVTPSTVKKSSDVASTSKK) the composition is skewed to polar residues. The segment covering 84-108 (SEEEEEDEPSSDSESGSESESDTEA) has biased composition (acidic residues). Residues 122–143 (NEKRQSEGKPEEERAKTETETG) are compositionally biased toward basic and acidic residues.

It belongs to the GeBP family.

In Arabidopsis thaliana (Mouse-ear cress), this protein is Probable transcription factor At4g00610.